The sequence spans 287 residues: Elongation factor Ts (287 aa).

An involved in Mg(2+) ion dislocation from EF-Tu region spans residues 80–83 (TDFL).

Belongs to the EF-Ts family.

The protein localises to the cytoplasm. Associates with the EF-Tu.GDP complex and induces the exchange of GDP to GTP. It remains bound to the aminoacyl-tRNA.EF-Tu.GTP complex up to the GTP hydrolysis stage on the ribosome. The sequence is that of Elongation factor Ts from Pseudomonas syringae pv. tomato (strain ATCC BAA-871 / DC3000).